The sequence spans 398 residues: Probable aminomethyltransferase (398 aa).

This sequence belongs to the GcvT family. As to quaternary structure, the glycine cleavage system is composed of four proteins: P, T, L and H.

The catalysed reaction is N(6)-[(R)-S(8)-aminomethyldihydrolipoyl]-L-lysyl-[protein] + (6S)-5,6,7,8-tetrahydrofolate = N(6)-[(R)-dihydrolipoyl]-L-lysyl-[protein] + (6R)-5,10-methylene-5,6,7,8-tetrahydrofolate + NH4(+). In terms of biological role, the glycine cleavage system catalyzes the degradation of glycine. The protein is Probable aminomethyltransferase of Pyrococcus abyssi (strain GE5 / Orsay).